Reading from the N-terminus, the 932-residue chain is Receptor-like protein 9a (932 aa).

The first 28 residues, 1–28, serve as a signal peptide directing secretion; that stretch reads MLIFTIPQFFFAAWVMVVSLQMQGYISC. The Extracellular portion of the chain corresponds to 29-888; the sequence is IEKERKGLLE…DDETAIDMET (860 aa). 3 N-linked (GlcNAc...) asparagine glycosylation sites follow: Asn-53, Asn-80, and Asn-90. 28 LRR repeats span residues 97 to 122, 126 to 152, 154 to 174, 175 to 200, 202 to 222, 223 to 246, 247 to 273, 275 to 295, 296 to 320, 322 to 345, 346 to 368, 370 to 393, 394 to 417, 418 to 441, 443 to 466, 468 to 491, 492 to 514, 516 to 535, 536 to 560, 561 to 583, 585 to 605, 606 to 629, 631 to 652, 653 to 676, 745 to 769, 770 to 792, 794 to 817, and 819 to 842; these read FEEL…GYKS, LKKL…AASS, RTLI…ELKD, LSNL…VLHK, HALD…GLCQ, LKNL…CFSS, LTQL…NLDS, EYLS…LIAN, LSKL…ISLQ, KFRL…LQQQ, KDLR…WFLE, YPKL…RLLV, HSLH…IGHV, LPNI…SFSE, KKIF…FCIG, SSLS…PMKL, ESLR…LIHS, GLVF…PSWF, GGFY…TLFN, VSFQ…HFSF, HMGL…STLL, ENVM…VSNR, FLYL…LCEL, KSIR…LNNV, FKFM…LGDF, QRIR…SFSN, TDIE…LTKL, and YIVV…KFLS. A glycan (N-linked (GlcNAc...) asparagine) is linked at Asn-140. N-linked (GlcNAc...) asparagine glycans are attached at residues Asn-261 and Asn-295. N-linked (GlcNAc...) asparagine glycans are attached at residues Asn-352 and Asn-380. Residues Asn-420, Asn-425, and Asn-454 are each glycosylated (N-linked (GlcNAc...) asparagine). Residues Asn-524, Asn-551, and Asn-560 are each glycosylated (N-linked (GlcNAc...) asparagine). Residues Asn-666 and Asn-675 are each glycosylated (N-linked (GlcNAc...) asparagine). 2 N-linked (GlcNAc...) asparagine glycosylation sites follow: Asn-776 and Asn-792. 4 N-linked (GlcNAc...) asparagine glycosylation sites follow: Asn-824, Asn-829, Asn-860, and Asn-866. A helical membrane pass occupies residues 889-909; it reads FYWSLFATYGITWMAFIVFLC. Topologically, residues 910–932 are cytoplasmic; the sequence is FDSPWRQAWFRLVNVFVSFLKCV.

Belongs to the RLP family.

It localises to the cell membrane. This chain is Receptor-like protein 9a, found in Arabidopsis thaliana (Mouse-ear cress).